A 294-amino-acid polypeptide reads, in one-letter code: Bifunctional protein FolD (294 aa).

NADP(+)-binding positions include 164 to 166, S193, and I234; that span reads GRS.

The protein belongs to the tetrahydrofolate dehydrogenase/cyclohydrolase family. Homodimer.

It carries out the reaction (6R)-5,10-methylene-5,6,7,8-tetrahydrofolate + NADP(+) = (6R)-5,10-methenyltetrahydrofolate + NADPH. It catalyses the reaction (6R)-5,10-methenyltetrahydrofolate + H2O = (6R)-10-formyltetrahydrofolate + H(+). It functions in the pathway one-carbon metabolism; tetrahydrofolate interconversion. In terms of biological role, catalyzes the oxidation of 5,10-methylenetetrahydrofolate to 5,10-methenyltetrahydrofolate and then the hydrolysis of 5,10-methenyltetrahydrofolate to 10-formyltetrahydrofolate. This is Bifunctional protein FolD from Flavobacterium psychrophilum (strain ATCC 49511 / DSM 21280 / CIP 103535 / JIP02/86).